The primary structure comprises 88 residues: MEQKSYVIIDETGIHARPATMLVQTASKFDSDIQLEYNGKKVNLKSIMGVMSLGVGKDAEITIYADGSDETDAIEAITDILSKEGLTK.

Positions 1–88 (MEQKSYVIID…DILSKEGLTK (88 aa)) constitute an HPr domain. Residue His-15 is the Pros-phosphohistidine intermediate of the active site. Ser-46 bears the Phosphoserine; by HPrK/P mark.

Belongs to the HPr family.

It localises to the cytoplasm. Phosphorylation on Ser-46 inhibits the phosphoryl transfer from enzyme I to HPr. Its function is as follows. General (non sugar-specific) component of the phosphoenolpyruvate-dependent sugar phosphotransferase system (sugar PTS). This major carbohydrate active-transport system catalyzes the phosphorylation of incoming sugar substrates concomitantly with their translocation across the cell membrane. The phosphoryl group from phosphoenolpyruvate (PEP) is transferred to the phosphoryl carrier protein HPr by enzyme I. Phospho-HPr then transfers it to the PTS EIIA domain. The protein is Phosphocarrier protein HPr (ptsH) of Staphylococcus xylosus.